Consider the following 452-residue polypeptide: Ethanolamine kinase 1 (452 aa).

The interval 26-64 (AVQTRIGNSAASRRSPAARPPVPAPPALPRGRPGTEGST) is disordered. The span at 43 to 53 (ARPPVPAPPAL) shows a compositional bias: pro residues.

Belongs to the choline/ethanolamine kinase family. In terms of tissue distribution, expressed in kidney, liver, placenta, heart, leukocyte, ovary and testis.

The protein localises to the cytoplasm. The enzyme catalyses ethanolamine + ATP = phosphoethanolamine + ADP + H(+). The protein operates within phospholipid metabolism; phosphatidylethanolamine biosynthesis; phosphatidylethanolamine from ethanolamine: step 1/3. Its function is as follows. Highly specific for ethanolamine phosphorylation. May be a rate-controlling step in phosphatidylethanolamine biosynthesis. The sequence is that of Ethanolamine kinase 1 from Homo sapiens (Human).